The chain runs to 207 residues: Testis-expressed protein 35 (207 aa).

Positions 43-79 (RKGMTRELKNELREVREQLTEKMEEIKQIKDIMDKDF) form a coiled coil.

As to expression, testis-specific. Expressed during spermatogenesis.

The protein resides in the nucleus. The polypeptide is Testis-expressed protein 35 (Tex35) (Mus musculus (Mouse)).